The sequence spans 619 residues: Chaperone protein HscA homolog (619 aa).

Belongs to the heat shock protein 70 family.

Functionally, chaperone involved in the maturation of iron-sulfur cluster-containing proteins. Has a low intrinsic ATPase activity which is markedly stimulated by HscB. This chain is Chaperone protein HscA homolog, found in Acinetobacter baumannii (strain AB0057).